A 546-amino-acid chain; its full sequence is Chaperonin GroEL (546 aa).

Residues T30–P33, K51, D87–T91, G415, N479–A481, and D495 each bind ATP. The disordered stretch occupies residues P525 to Y546. Positions G536–Y546 are enriched in gly residues.

This sequence belongs to the chaperonin (HSP60) family. In terms of assembly, forms a cylinder of 14 subunits composed of two heptameric rings stacked back-to-back. Interacts with the co-chaperonin GroES.

Its subcellular location is the cytoplasm. The catalysed reaction is ATP + H2O + a folded polypeptide = ADP + phosphate + an unfolded polypeptide.. Functionally, together with its co-chaperonin GroES, plays an essential role in assisting protein folding. The GroEL-GroES system forms a nano-cage that allows encapsulation of the non-native substrate proteins and provides a physical environment optimized to promote and accelerate protein folding. This Solidesulfovibrio magneticus (strain ATCC 700980 / DSM 13731 / RS-1) (Desulfovibrio magneticus) protein is Chaperonin GroEL.